The sequence spans 117 residues: Prefoldin subunit beta (117 aa).

Belongs to the prefoldin subunit beta family. Heterohexamer of two alpha and four beta subunits.

It is found in the cytoplasm. Its function is as follows. Molecular chaperone capable of stabilizing a range of proteins. Seems to fulfill an ATP-independent, HSP70-like function in archaeal de novo protein folding. The polypeptide is Prefoldin subunit beta (Thermococcus kodakarensis (strain ATCC BAA-918 / JCM 12380 / KOD1) (Pyrococcus kodakaraensis (strain KOD1))).